The sequence spans 267 residues: tRNA (guanine-N(1)-)-methyltransferase (267 aa).

Residues G112 and I131–L136 contribute to the S-adenosyl-L-methionine site. The span at D245–R259 shows a compositional bias: basic and acidic residues. The segment at D245–S267 is disordered.

It belongs to the RNA methyltransferase TrmD family. Homodimer.

The protein resides in the cytoplasm. It carries out the reaction guanosine(37) in tRNA + S-adenosyl-L-methionine = N(1)-methylguanosine(37) in tRNA + S-adenosyl-L-homocysteine + H(+). Specifically methylates guanosine-37 in various tRNAs. This is tRNA (guanine-N(1)-)-methyltransferase from Spiroplasma kunkelii.